The primary structure comprises 172 residues: NADH-quinone oxidoreductase subunit B (172 aa).

Residues C46, C47, C111, and C141 each coordinate [4Fe-4S] cluster.

This sequence belongs to the complex I 20 kDa subunit family. In terms of assembly, NDH-1 is composed of 14 different subunits. Subunits NuoB, C, D, E, F, and G constitute the peripheral sector of the complex. Requires [4Fe-4S] cluster as cofactor.

The protein localises to the cell membrane. It carries out the reaction a quinone + NADH + 5 H(+)(in) = a quinol + NAD(+) + 4 H(+)(out). Functionally, NDH-1 shuttles electrons from NADH, via FMN and iron-sulfur (Fe-S) centers, to quinones in the respiratory chain. The immediate electron acceptor for the enzyme in this species is believed to be a menaquinone. Couples the redox reaction to proton translocation (for every two electrons transferred, four hydrogen ions are translocated across the cytoplasmic membrane), and thus conserves the redox energy in a proton gradient. The chain is NADH-quinone oxidoreductase subunit B from Bacillus anthracis (strain A0248).